The chain runs to 342 residues: Aquaporin-7 (342 aa).

The Cytoplasmic segment spans residues 1–36 (MVQASGHRRSTRGSKMVSWSVIAKIQEILQRKMVRE). The residue at position 20 (Ser20) is a Phosphoserine. A helical membrane pass occupies residues 37-54 (FLAEFMSTYVMMVFGLGS). The Extracellular segment spans residues 55–67 (VAHMVLNKKYGSY). A helical membrane pass occupies residues 68 to 85 (LGVNLGFGFGVTMGVHVA). Over 86–89 (GRIS) the chain is Cytoplasmic. Residues 90-103 (GAHMNAAVTFANCA) constitute an intramembrane region (discontinuously helical). Residues 94 to 96 (NAA) carry the NPA 1 motif. The Cytoplasmic segment spans residues 104–111 (LGRVPWRK). A helical membrane pass occupies residues 112–132 (FPVYVLGQFLGSFLAAATIYS). Residues 133–170 (LFYTAILHFSGGQLMVTGPVATAGIFATYLPDHMTLWR) are Extracellular-facing. A helical membrane pass occupies residues 171–188 (GFLNEAWLTGMLQLCLFA). At 189-200 (ITDQENNPALPG) the chain is on the cytoplasmic side. A helical transmembrane segment spans residues 201–217 (TEALVIGILVVIIGVSL). The Extracellular portion of the chain corresponds to 218 to 221 (GMNT). The discontinuously helical intramembrane region spans 222-235 (GYAINPSRDLPPRI). The NPA 2 signature appears at 226 to 228 (NPS). Residues 236–253 (FTFIAGWGKQVFSNGENW) lie on the Extracellular side of the membrane. The chain crosses the membrane as a helical span at residues 254 to 275 (WWVPVVAPLLGAYLGGIIYLVF). The Cytoplasmic portion of the chain corresponds to 276–342 (IGSTIPREPL…LHESMALEHF (67 aa)).

This sequence belongs to the MIP/aquaporin (TC 1.A.8) family. As to quaternary structure, homotetramer; each monomer provides an independent glycerol/water pore. Two homotetramers on opposing membranes can dimerize, forming a cell-cell junction. Interacts with PLIN1. In terms of processing, phosphorylation by PKA could prevent the interaction with PLIN1. Detected in the sperm head (at protein level). Detected in white adipose tissue.

The protein resides in the cell membrane. Its subcellular location is the cytoplasmic vesicle membrane. It localises to the lipid droplet. The enzyme catalyses glycerol(in) = glycerol(out). It carries out the reaction H2O(in) = H2O(out). The catalysed reaction is urea(in) = urea(out). With respect to regulation, glycerol transport is regulated by pH, with the porin being permeable to glycerol at pH 7.4 but not at pH 5.5. Water permeability, however, is not influenced by pH. Inhibited by mercury ions. Functionally, aquaglyceroporins form homotetrameric transmembrane channels, with each monomer independently mediating glycerol and water transport across the plasma membrane along their osmotic gradient. Could also be permeable to urea. Mediates the efflux of glycerol, formed upon triglyceride hydrolysis, to avoid its accumulation in adipocytes and to make it available to other tissues. In the kidney, mediates the reabsorption of glycerol, preventing its loss in urine, again participating to energy homeostasis. In pancreatic beta cells, it also mediates the efflux of glycerol, regulating its intracellular levels. In Homo sapiens (Human), this protein is Aquaporin-7.